The following is a 464-amino-acid chain: tRNA(Ile2) 2-agmatinylcytidine synthetase TiaS (464 aa).

Belongs to the TiaS family.

It localises to the cytoplasm. It catalyses the reaction cytidine(34) in tRNA(Ile2) + agmatine + ATP + H2O = 2-agmatinylcytidine(34) in tRNA(Ile2) + AMP + 2 phosphate + 2 H(+). ATP-dependent agmatine transferase that catalyzes the formation of 2-agmatinylcytidine (agm2C) at the wobble position (C34) of tRNA(Ile2), converting the codon specificity from AUG to AUA. The sequence is that of tRNA(Ile2) 2-agmatinylcytidine synthetase TiaS from Ignisphaera aggregans (strain DSM 17230 / JCM 13409 / AQ1.S1).